The sequence spans 145 residues: Transcriptional regulator MraZ (145 aa).

SpoVT-AbrB domains follow at residues glutamate 5–glutamate 47 and alanine 76–glutamine 119.

Belongs to the MraZ family. As to quaternary structure, forms oligomers.

The protein localises to the cytoplasm. Its subcellular location is the nucleoid. This chain is Transcriptional regulator MraZ, found in Pelotomaculum thermopropionicum (strain DSM 13744 / JCM 10971 / SI).